The primary structure comprises 186 residues: Ribosome maturation factor RimP (186 aa).

It belongs to the RimP family.

The protein localises to the cytoplasm. Its function is as follows. Required for maturation of 30S ribosomal subunits. The polypeptide is Ribosome maturation factor RimP (Novosphingobium aromaticivorans (strain ATCC 700278 / DSM 12444 / CCUG 56034 / CIP 105152 / NBRC 16084 / F199)).